Here is a 178-residue protein sequence, read N- to C-terminus: Small ribosomal subunit protein uS5 (178 aa).

Residues F15–V78 form the S5 DRBM domain.

Belongs to the universal ribosomal protein uS5 family. In terms of assembly, part of the 30S ribosomal subunit. Contacts proteins S4 and S8.

Functionally, with S4 and S12 plays an important role in translational accuracy. Located at the back of the 30S subunit body where it stabilizes the conformation of the head with respect to the body. This is Small ribosomal subunit protein uS5 from Thermotoga sp. (strain RQ2).